Reading from the N-terminus, the 678-residue chain is DNA ligase (678 aa).

NAD(+) is bound by residues 47–51 (DSDYD), 96–97 (SL), and Glu122. Lys124 acts as the N6-AMP-lysine intermediate in catalysis. Residues Arg145, Glu182, Lys300, and Lys324 each contribute to the NAD(+) site. 4 residues coordinate Zn(2+): Cys418, Cys421, Cys436, and Cys442. A BRCT domain is found at 602–678 (AYNESFTGKT…ILEDNLKDLL (77 aa)).

Belongs to the NAD-dependent DNA ligase family. LigA subfamily. Mg(2+) serves as cofactor. The cofactor is Mn(2+).

The catalysed reaction is NAD(+) + (deoxyribonucleotide)n-3'-hydroxyl + 5'-phospho-(deoxyribonucleotide)m = (deoxyribonucleotide)n+m + AMP + beta-nicotinamide D-nucleotide.. Functionally, DNA ligase that catalyzes the formation of phosphodiester linkages between 5'-phosphoryl and 3'-hydroxyl groups in double-stranded DNA using NAD as a coenzyme and as the energy source for the reaction. It is essential for DNA replication and repair of damaged DNA. This is DNA ligase from Francisella tularensis subsp. tularensis (strain SCHU S4 / Schu 4).